The following is a 1335-amino-acid chain: Aldehyde oxidase 2 (1335 aa).

The 2Fe-2S ferredoxin-type domain occupies 8–95 (DVLVFFVNGR…GAAVTTVEGV (88 aa)). [2Fe-2S] cluster contacts are provided by Cys-47, Cys-52, Cys-55, and Cys-77. Position 116 (Gln-116) interacts with Mo-molybdopterin. [2Fe-2S] cluster-binding residues include Cys-117, Cys-120, Cys-152, and Cys-154. Cys-154 provides a ligand contact to Mo-molybdopterin. Positions 242–427 (FRGDRVTWVS…ESVHIPHSQK (186 aa)) constitute an FAD-binding PCMH-type domain. Residues 270–277 (LVLGNTAL), Ala-351, Ser-360, His-364, Asp-373, and Leu-417 each bind FAD. Mo-molybdopterin-binding positions include 821 to 822 (GF), 1103 to 1106 (ASVG), Gln-1218, and Leu-1285. The active-site Proton acceptor; for azaheterocycle hydroxylase activity is the Glu-1287.

Belongs to the xanthine dehydrogenase family. In terms of assembly, homodimer. [2Fe-2S] cluster is required as a cofactor. It depends on FAD as a cofactor. Mo-molybdopterin serves as cofactor. As to expression, detected in kidney, Harderian gland and olfactory mucosa.

The protein resides in the cytoplasm. The enzyme catalyses an aldehyde + O2 + H2O = a carboxylate + H2O2 + H(+). Its function is as follows. Oxidase with broad substrate specificity, oxidizing aromatic azaheterocycles, such as phthalazine, as well as aldehydes, such as benzaldehyde and retinal. The protein is Aldehyde oxidase 2 (AOX2) of Cavia porcellus (Guinea pig).